A 167-amino-acid chain; its full sequence is Transcription antitermination protein NusB (167 aa).

Positions 1–32 (MSDTPETGKPAAGTKPAARTEAKAPPKSARRR) are disordered.

Belongs to the NusB family.

Involved in transcription antitermination. Required for transcription of ribosomal RNA (rRNA) genes. Binds specifically to the boxA antiterminator sequence of the ribosomal RNA (rrn) operons. The chain is Transcription antitermination protein NusB from Cupriavidus pinatubonensis (strain JMP 134 / LMG 1197) (Cupriavidus necator (strain JMP 134)).